A 113-amino-acid polypeptide reads, in one-letter code: Holo-[acyl-carrier-protein] synthase (113 aa).

Positions 8 and 57 each coordinate Mg(2+).

This sequence belongs to the P-Pant transferase superfamily. AcpS family. Requires Mg(2+) as cofactor.

It is found in the cytoplasm. It catalyses the reaction apo-[ACP] + CoA = holo-[ACP] + adenosine 3',5'-bisphosphate + H(+). Transfers the 4'-phosphopantetheine moiety from coenzyme A to a Ser of acyl-carrier-protein. The protein is Holo-[acyl-carrier-protein] synthase of Thermodesulfovibrio yellowstonii (strain ATCC 51303 / DSM 11347 / YP87).